The following is a 445-amino-acid chain: tRNA modification GTPase MnmE (445 aa).

R20, E79, and K119 together coordinate (6S)-5-formyl-5,6,7,8-tetrahydrofolate. In terms of domain architecture, TrmE-type G spans 215-371; it reads GLKLAIIGPP…ILKNIEEIAE (157 aa). Residue N225 participates in K(+) binding. Residues 225–230, 244–250, and 269–272 each bind GTP; these read NAGKSS, SNIAGTT, and DTAG. S229 provides a ligand contact to Mg(2+). S244, I246, and T249 together coordinate K(+). T250 contacts Mg(2+). K445 lines the (6S)-5-formyl-5,6,7,8-tetrahydrofolate pocket.

Belongs to the TRAFAC class TrmE-Era-EngA-EngB-Septin-like GTPase superfamily. TrmE GTPase family. As to quaternary structure, homodimer. Heterotetramer of two MnmE and two MnmG subunits. K(+) is required as a cofactor.

The protein resides in the cytoplasm. Its function is as follows. Exhibits a very high intrinsic GTPase hydrolysis rate. Involved in the addition of a carboxymethylaminomethyl (cmnm) group at the wobble position (U34) of certain tRNAs, forming tRNA-cmnm(5)s(2)U34. The polypeptide is tRNA modification GTPase MnmE (Rickettsia bellii (strain RML369-C)).